A 213-amino-acid polypeptide reads, in one-letter code: uncharacterized protein (213 aa).

A compositionally biased stretch (basic and acidic residues) spans 1-11 (MFATKDPEFEN). Disordered regions lie at residues 1 to 21 (MFATKDPEFENRINTNKSPRN) and 63 to 98 (LRNKAPKNEETKHEEHTPDNHEETDHHEAKQQEQAW). The span at 12–21 (RINTNKSPRN) shows a compositional bias: polar residues. Residues 63 to 93 (LRNKAPKNEETKHEEHTPDNHEETDHHEAKQ) show a composition bias toward basic and acidic residues.

This is an uncharacterized protein from Escherichia coli (strain K12).